The following is a 160-amino-acid chain: UPF0178 protein PA5247 (160 aa).

It belongs to the UPF0178 family.

In Pseudomonas aeruginosa (strain ATCC 15692 / DSM 22644 / CIP 104116 / JCM 14847 / LMG 12228 / 1C / PRS 101 / PAO1), this protein is UPF0178 protein PA5247.